The following is a 63-amino-acid chain: Cecropin-A (63 aa).

A signal peptide spans 1–22; sequence MNFVRILSFVFALVLALGAVSA. Positions 23 to 26 are excised as a propeptide; sequence APEP. Leucine 61 carries the leucine amide modification.

This sequence belongs to the cecropin family. As to expression, highest expression in fat body and hemocytes. Is also expressed in Malpighian tubules and to a much lesser extent in midgut. Not present in silk gland.

Its subcellular location is the secreted. In terms of biological role, cecropins have lytic and antibacterial activity against several Gram-positive and Gram-negative bacteria. The chain is Cecropin-A (CECA) from Bombyx mori (Silk moth).